The following is a 270-amino-acid chain: MLTIGQLARIFEISTKTLRHYDAIGLFVPARTGSDNGYRYYQPEQIEQLSRILALRRLDVPLEAIDRLKRDGALDDPQRLRHFLQRHQHTLREEISARQRLLAELDRTLATLAHWRIRNMHARIVERPAFSVVGMEYFGSAPGDTIGQLWERFIPREHEIAGKHDPEVSYGICAQQPNGEFHYVAGFEVQEGWPVPEGMVRFQVPAQKYAVFTHKGTAPQIAESFQAIYSHLLAERGLEPKAGVDFEYYDQRFRGPLDPNSQVDLYIPIY.

Met1 contacts 3',3'-c-di-GMP. The HTH merR-type domain occupies 1–71 (MLTIGQLARI…LEAIDRLKRD (71 aa)). A DNA-binding region (H-T-H motif) is located at residues 4 to 23 (IGQLARIFEISTKTLRHYDA). 3',3'-c-di-GMP-binding residues include Arg31, Ser34, Asp35, Tyr40, Arg67, Arg70, Arg86, and Tyr270. Residues 120–270 (MHARIVERPA…SQVDLYIPIY (151 aa)) form an involved in effector-binding, probably including pyocyanine-binding region.

Monomer. Homodimer; dimer formation enhanced in the presence of the second messenger, cyclic di-GMP (c-di-GMP). Homotetramer; dimer of dimers, arranged in a head-to-tail fashion, which may reduce DNA-binding ability. Conformational changes upon binding c-di-GMP or pyocyanine may facilitate DNA binding.

Its function is as follows. Transcriptional regulator. Responsive to the second messenger cyclic di-GMP (c-di-GMP) and to the virulence factor pyocyanine, which both enhance gene expression and promoter DNA binding of BrlR. Activates expression of operons encoding the multidrug efflux pumps MexAB-OprM and MexEF-OprN and several ABC transport systems, acting by direct binding to their respective promoters. Also acts as a repressor of the two component regulatory system, PhoPQ. Binds to promoter of its own gene. Contributes to the antimicrobial tolerance exhibited by biofilms, acting, at least in part, by activating expression of multidrug efflux pumps and ABC transporters. This is Transcriptional regulator BrlR from Pseudomonas aeruginosa (strain ATCC 15692 / DSM 22644 / CIP 104116 / JCM 14847 / LMG 12228 / 1C / PRS 101 / PAO1).